Here is a 1008-residue protein sequence, read N- to C-terminus: SKI family transcriptional corepressor 2 (1008 aa).

2 disordered regions span residues 280–315 and 514–927; these read HLLG…DDDD and EPGG…KKDV. Pro residues-rich tracts occupy residues 284 to 294 and 525 to 534; these read APPPPPPPPPL and APPPGQPPPV. Low complexity-rich tracts occupy residues 535 to 544 and 578 to 595; these read VANGPGSGPP and GVTS…SVGT. Positions 626 to 635 are enriched in basic and acidic residues; the sequence is GGKDDAESLA. Over residues 649-666 the composition is skewed to basic residues; it reads PAHHHHHHHHPHHHHHHP. Over residues 691–703 the composition is skewed to pro residues; sequence APPPPPPPPPLAP. Composition is skewed to acidic residues over residues 724 to 739 and 748 to 766; these read DSSE…QEVD and GEEE…EDEE. Basic and acidic residues predominate over residues 787 to 797; the sequence is LSEKGSGRDRT. Positions 842-855 are enriched in low complexity; the sequence is SSSGGSRPGSPVHH. Composition is skewed to basic and acidic residues over residues 856–872, 880–890, and 905–915; these read PSLE…KPKE, TKDDNFSDKNK, and FWRERSGEHTQ.

This sequence belongs to the SKI family. As to quaternary structure, interacts with SMAD2 and SMAD3. As to expression, expression is restricted to adult and embryonic central nervous system. Expressed at high levels in the developing cerebellum, ventral metencephalon and myelencephalon at 12.5 dpc (at protein level). In the adult cerebellum, expressed specifically in Purkinje cells.

The protein localises to the nucleus. The protein resides in the cytoplasm. In terms of biological role, acts as a TGF-beta antagonist in the nervous system. Exhibits transcriptional repressor activity. This chain is SKI family transcriptional corepressor 2, found in Mus musculus (Mouse).